Here is a 399-residue protein sequence, read N- to C-terminus: Transaminase BacF (399 aa).

Pyridoxal 5'-phosphate contacts are provided by residues 103 to 104 (GK), Tyr-128, Asn-178, Tyr-209, and 236 to 238 (SFS). Lys-239 carries the N6-(pyridoxal phosphate)lysine modification. Arg-247 lines the pyridoxal 5'-phosphate pocket.

It belongs to the class-I pyridoxal-phosphate-dependent aminotransferase family. As to quaternary structure, homodimer. It depends on pyridoxal 5'-phosphate as a cofactor.

The protein localises to the cytoplasm. Its pathway is antibiotic biosynthesis; bacilysin biosynthesis. Its function is as follows. Part of the bacABCDEF operon responsible for the biosynthesis of the nonribosomally synthesized dipeptide antibiotic bacilysin, composed of L-alanine and L-anticapsin. Bacilysin is an irreversible inactivator of the glutaminase domain of glucosamine synthetase. Catalyzes the reductive amination of the C2 ketone of tetrahydro-hydroxyphenylpyruvate (H4HPP), with L-Phe as an amino donor, to yield tetrahydrotyrosine (H4Tyr) diastereomer. D-Phe is not an effective amino donor. BacF associated to BacG converts 3E,7R- and 3Z,7R-ex-H2HPP to 2S,4R,7R- and 2S,4S,7R-H4Tyr, respectively. Given that bacilysin has the 2S,4S stereochemistry in its anticapsin moiety, it is likely that the 2S,4S-H4Tyr is the diastereomer used for the biosynthesis. The polypeptide is Transaminase BacF (Bacillus subtilis (strain 168)).